The chain runs to 520 residues: MLKSASQNFFRAYSSRIGRYAATASGKLAQSRLSNIPTPKALKKFLDEYIVGQEIGKKVLSVAVYNHYLRINDKQKKGELQRQRELMEREKIADDRDEPIFSGNSESKAGWRNLQRQFNLAGREVDEDLELSKSNVLVVGPSGSGKTLLATTLAKILNVPIAITDCTQLTQAGYIGEDVEVCIERLLVNAEFDVARAEKGIIVLDEIDKLAKPAASIGTKDVSGEGVQQSLLKIIEGHKVEITVKRPVKHDIDGQKNQTTTKKDEVFVVDTSNILFMIMGAFVGLDKHIVKRIEDMKKIQKAGESVESSNSKEVEKERAKKFRFSNTLEQVELDNGKKVCALDLTTPTDLVSFGLIPELIGRVPIITALQPLQRDDLFHILKEPKNALLDQYEYIFKQFGVRLCVTQKALKKVAQFALKEGTGARGLRGIMERLLLNVNYDCPGSNIAYVLIDEATVDSLQETEHSLASQVDVKYYSGDEKDSLIRDVSEEDKKLGVMLEKELGHSANIHTPTIPKRSLT.

The N-terminal 13 residues, 1–13, are a transit peptide targeting the mitochondrion; sequence MLKSASQNFFRAY. 140 to 147 is an ATP binding site; it reads GPSGSGKT.

This sequence belongs to the ClpX chaperone family. Homohexamer that forms a ring structure; this hexamerization requires ATP binding. Interacts with HEM1.

It is found in the mitochondrion inner membrane. Functionally, ATP-dependent unfoldase that stimulates the incorporation of the pyridoxal phosphate cofactor into 5-aminolevulinate synthase (HEM1), thereby activating 5-aminolevulinate (ALA) synthesis, the first step in heme biosynthesis. Up-regulates heme biosynthesis. This is ATP-dependent clpX-like chaperone, mitochondrial from Saccharomyces cerevisiae (strain ATCC 204508 / S288c) (Baker's yeast).